The primary structure comprises 94 residues: Small ribosomal subunit protein uS19 (94 aa).

A disordered region spans residues 75 to 94 (SHTRTFKGHAGDKKAAGSKR). A compositionally biased stretch (basic and acidic residues) spans 83–94 (HAGDKKAAGSKR).

Belongs to the universal ribosomal protein uS19 family.

Functionally, protein S19 forms a complex with S13 that binds strongly to the 16S ribosomal RNA. The chain is Small ribosomal subunit protein uS19 from Nitrosomonas europaea (strain ATCC 19718 / CIP 103999 / KCTC 2705 / NBRC 14298).